The chain runs to 654 residues: DNA ligase (654 aa).

Residues 37–41 (DEEYD), 86–87 (SM), and glutamate 113 each bind NAD(+). The active-site N6-AMP-lysine intermediate is the lysine 115. NAD(+) is bound by residues arginine 136, glutamate 170, and lysine 308. Zn(2+) contacts are provided by cysteine 402, cysteine 405, cysteine 418, and cysteine 423. A BRCT domain is found at 576-654 (ITQNAFSGKS…GEFERLKLEI (79 aa)).

This sequence belongs to the NAD-dependent DNA ligase family. LigA subfamily. Requires Mg(2+) as cofactor. Mn(2+) serves as cofactor.

It catalyses the reaction NAD(+) + (deoxyribonucleotide)n-3'-hydroxyl + 5'-phospho-(deoxyribonucleotide)m = (deoxyribonucleotide)n+m + AMP + beta-nicotinamide D-nucleotide.. In terms of biological role, DNA ligase that catalyzes the formation of phosphodiester linkages between 5'-phosphoryl and 3'-hydroxyl groups in double-stranded DNA using NAD as a coenzyme and as the energy source for the reaction. It is essential for DNA replication and repair of damaged DNA. This is DNA ligase from Campylobacter curvus (strain 525.92).